The primary structure comprises 200 residues: Imidazole glycerol phosphate synthase subunit HisH (200 aa).

Residues 2–200 enclose the Glutamine amidotransferase type-1 domain; that stretch reads KVAIVEYGVG…LGEVLTGASR (199 aa). The active-site Nucleophile is the Cys-79. Active-site residues include His-179 and Glu-181.

In terms of assembly, heterodimer of HisH and HisF.

It is found in the cytoplasm. The enzyme catalyses 5-[(5-phospho-1-deoxy-D-ribulos-1-ylimino)methylamino]-1-(5-phospho-beta-D-ribosyl)imidazole-4-carboxamide + L-glutamine = D-erythro-1-(imidazol-4-yl)glycerol 3-phosphate + 5-amino-1-(5-phospho-beta-D-ribosyl)imidazole-4-carboxamide + L-glutamate + H(+). It carries out the reaction L-glutamine + H2O = L-glutamate + NH4(+). Its pathway is amino-acid biosynthesis; L-histidine biosynthesis; L-histidine from 5-phospho-alpha-D-ribose 1-diphosphate: step 5/9. In terms of biological role, IGPS catalyzes the conversion of PRFAR and glutamine to IGP, AICAR and glutamate. The HisH subunit catalyzes the hydrolysis of glutamine to glutamate and ammonia as part of the synthesis of IGP and AICAR. The resulting ammonia molecule is channeled to the active site of HisF. This chain is Imidazole glycerol phosphate synthase subunit HisH, found in Methanopyrus kandleri (strain AV19 / DSM 6324 / JCM 9639 / NBRC 100938).